A 447-amino-acid polypeptide reads, in one-letter code: Exodeoxyribonuclease 7 large subunit (447 aa).

Belongs to the XseA family. In terms of assembly, heterooligomer composed of large and small subunits.

It localises to the cytoplasm. The enzyme catalyses Exonucleolytic cleavage in either 5'- to 3'- or 3'- to 5'-direction to yield nucleoside 5'-phosphates.. In terms of biological role, bidirectionally degrades single-stranded DNA into large acid-insoluble oligonucleotides, which are then degraded further into small acid-soluble oligonucleotides. The sequence is that of Exodeoxyribonuclease 7 large subunit from Lactobacillus helveticus (strain DPC 4571).